The primary structure comprises 217 residues: Uracil-DNA glycosylase (217 aa).

D62 (proton acceptor) is an active-site residue.

This sequence belongs to the uracil-DNA glycosylase (UDG) superfamily. UNG family.

The protein localises to the cytoplasm. The enzyme catalyses Hydrolyzes single-stranded DNA or mismatched double-stranded DNA and polynucleotides, releasing free uracil.. Excises uracil residues from the DNA which can arise as a result of misincorporation of dUMP residues by DNA polymerase or due to deamination of cytosine. The protein is Uracil-DNA glycosylase of Streptococcus pyogenes serotype M49 (strain NZ131).